Here is a 98-residue protein sequence, read N- to C-terminus: MPIIYMNIMLSFIISLLGMLIYRSHLMSSLLCLEGMMLSLFIMSTLMALNMHFPLANIVPVALLVFAACEAAVGLALLVSISNTYGLDYVHNLSLLQC.

The next 3 helical transmembrane spans lie at 1 to 21 (MPIIYMNIMLSFIISLLGMLI), 29 to 49 (SLLCLEGMMLSLFIMSTLMAL), and 58 to 78 (IVPVALLVFAACEAAVGLALL).

The protein belongs to the complex I subunit 4L family. Core subunit of respiratory chain NADH dehydrogenase (Complex I) which is composed of 45 different subunits.

Its subcellular location is the mitochondrion inner membrane. It carries out the reaction a ubiquinone + NADH + 5 H(+)(in) = a ubiquinol + NAD(+) + 4 H(+)(out). Functionally, core subunit of the mitochondrial membrane respiratory chain NADH dehydrogenase (Complex I) which catalyzes electron transfer from NADH through the respiratory chain, using ubiquinone as an electron acceptor. Part of the enzyme membrane arm which is embedded in the lipid bilayer and involved in proton translocation. This Semnopithecus entellus (Northern plains gray langur) protein is NADH-ubiquinone oxidoreductase chain 4L (MT-ND4L).